Here is a 357-residue protein sequence, read N- to C-terminus: S-adenosylmethionine:tRNA ribosyltransferase-isomerase (357 aa).

This sequence belongs to the QueA family. In terms of assembly, monomer.

It is found in the cytoplasm. The enzyme catalyses 7-aminomethyl-7-carbaguanosine(34) in tRNA + S-adenosyl-L-methionine = epoxyqueuosine(34) in tRNA + adenine + L-methionine + 2 H(+). Its pathway is tRNA modification; tRNA-queuosine biosynthesis. In terms of biological role, transfers and isomerizes the ribose moiety from AdoMet to the 7-aminomethyl group of 7-deazaguanine (preQ1-tRNA) to give epoxyqueuosine (oQ-tRNA). The chain is S-adenosylmethionine:tRNA ribosyltransferase-isomerase from Hamiltonella defensa subsp. Acyrthosiphon pisum (strain 5AT).